The sequence spans 915 residues: Pentatricopeptide repeat-containing protein At5g65560 (915 aa).

PPR repeat units lie at residues Ile-182 to Pro-216, Asn-217 to Pro-251, Asp-252 to Arg-286, Asn-287 to Pro-321, Thr-322 to Pro-356, Asn-357 to Pro-391, Asn-392 to Pro-426, Asn-427 to Pro-460, Asp-461 to Pro-495, Asp-496 to Pro-530, Asn-531 to Pro-565, Asn-566 to Pro-600, Thr-601 to Pro-635, Asp-636 to Pro-670, Asp-671 to Pro-705, Lys-724 to Pro-758, Asn-759 to Pro-794, Ser-795 to Pro-829, Gln-830 to Glu-864, and Asp-865 to Phe-899.

This sequence belongs to the PPR family. P subfamily.

This chain is Pentatricopeptide repeat-containing protein At5g65560, found in Arabidopsis thaliana (Mouse-ear cress).